We begin with the raw amino-acid sequence, 175 residues long: 6,7-dimethyl-8-ribityllumazine synthase (175 aa).

5-amino-6-(D-ribitylamino)uracil contacts are provided by residues phenylalanine 24, 58-60 (ALE), and 82-84 (AVI). 87 to 88 (ET) is a binding site for (2S)-2-hydroxy-3-oxobutyl phosphate. Histidine 90 acts as the Proton donor in catalysis. Asparagine 115 lines the 5-amino-6-(D-ribitylamino)uracil pocket. Arginine 129 serves as a coordination point for (2S)-2-hydroxy-3-oxobutyl phosphate. The disordered stretch occupies residues 150-175 (ALEPEEDDEDEDDEDEDFDDEEDDGR). A compositionally biased stretch (acidic residues) spans 152-175 (EPEEDDEDEDDEDEDFDDEEDDGR).

The protein belongs to the DMRL synthase family.

It carries out the reaction (2S)-2-hydroxy-3-oxobutyl phosphate + 5-amino-6-(D-ribitylamino)uracil = 6,7-dimethyl-8-(1-D-ribityl)lumazine + phosphate + 2 H2O + H(+). It participates in cofactor biosynthesis; riboflavin biosynthesis; riboflavin from 2-hydroxy-3-oxobutyl phosphate and 5-amino-6-(D-ribitylamino)uracil: step 1/2. Functionally, catalyzes the formation of 6,7-dimethyl-8-ribityllumazine by condensation of 5-amino-6-(D-ribitylamino)uracil with 3,4-dihydroxy-2-butanone 4-phosphate. This is the penultimate step in the biosynthesis of riboflavin. The protein is 6,7-dimethyl-8-ribityllumazine synthase of Bordetella bronchiseptica (strain ATCC BAA-588 / NCTC 13252 / RB50) (Alcaligenes bronchisepticus).